The sequence spans 434 residues: Methylenetetrahydrofolate--tRNA-(uracil-5-)-methyltransferase TrmFO (434 aa).

9-14 (GAGLAG) lines the FAD pocket.

Belongs to the MnmG family. TrmFO subfamily. It depends on FAD as a cofactor.

It is found in the cytoplasm. The catalysed reaction is uridine(54) in tRNA + (6R)-5,10-methylene-5,6,7,8-tetrahydrofolate + NADH + H(+) = 5-methyluridine(54) in tRNA + (6S)-5,6,7,8-tetrahydrofolate + NAD(+). It catalyses the reaction uridine(54) in tRNA + (6R)-5,10-methylene-5,6,7,8-tetrahydrofolate + NADPH + H(+) = 5-methyluridine(54) in tRNA + (6S)-5,6,7,8-tetrahydrofolate + NADP(+). Its function is as follows. Catalyzes the folate-dependent formation of 5-methyl-uridine at position 54 (M-5-U54) in all tRNAs. The polypeptide is Methylenetetrahydrofolate--tRNA-(uracil-5-)-methyltransferase TrmFO (Listeria monocytogenes serotype 4b (strain F2365)).